Here is a 420-residue protein sequence, read N- to C-terminus: Multifunctional CCA protein (420 aa).

Gly-8 and Arg-11 together coordinate ATP. CTP contacts are provided by Gly-8 and Arg-11. Residues Asp-21 and Asp-23 each coordinate Mg(2+). Arg-91, Arg-137, and Arg-140 together coordinate ATP. Positions 91, 137, and 140 each coordinate CTP. The 107-residue stretch at Thr-228–Trp-334 folds into the HD domain.

This sequence belongs to the tRNA nucleotidyltransferase/poly(A) polymerase family. Bacterial CCA-adding enzyme type 1 subfamily. Monomer. Can also form homodimers and oligomers. The cofactor is Mg(2+). Ni(2+) is required as a cofactor.

It carries out the reaction a tRNA precursor + 2 CTP + ATP = a tRNA with a 3' CCA end + 3 diphosphate. It catalyses the reaction a tRNA with a 3' CCA end + 2 CTP + ATP = a tRNA with a 3' CCACCA end + 3 diphosphate. In terms of biological role, catalyzes the addition and repair of the essential 3'-terminal CCA sequence in tRNAs without using a nucleic acid template. Adds these three nucleotides in the order of C, C, and A to the tRNA nucleotide-73, using CTP and ATP as substrates and producing inorganic pyrophosphate. tRNA 3'-terminal CCA addition is required both for tRNA processing and repair. Also involved in tRNA surveillance by mediating tandem CCA addition to generate a CCACCA at the 3' terminus of unstable tRNAs. While stable tRNAs receive only 3'-terminal CCA, unstable tRNAs are marked with CCACCA and rapidly degraded. The protein is Multifunctional CCA protein of Pasteurella multocida (strain Pm70).